The sequence spans 397 residues: Xylose isomerase (397 aa).

Active-site residues include H54 and D57. 7 residues coordinate Mg(2+): E181, E217, H220, D245, D255, D257, and D293.

The protein belongs to the xylose isomerase family. As to quaternary structure, homotetramer. Mg(2+) serves as cofactor.

It localises to the cytoplasm. The catalysed reaction is alpha-D-xylose = alpha-D-xylulofuranose. This chain is Xylose isomerase, found in Clavibacter michiganensis subsp. michiganensis (strain NCPPB 382).